We begin with the raw amino-acid sequence, 113 residues long: Small ribosomal subunit protein mS41 (113 aa).

The N-terminal 22 residues, 1 to 22 (MLILKRIFIIRNFIFPFSNCRY), are a transit peptide targeting the mitochondrion.

Belongs to the mitochondrion-specific ribosomal protein mS41 family. In terms of assembly, component of the mitochondrial small ribosomal subunit (mt-SSU). Mature yeast 74S mitochondrial ribosomes consist of a small (37S) and a large (54S) subunit. The 37S small subunit contains a 15S ribosomal RNA (15S mt-rRNA) and at least 32 different proteins. The 54S large subunit contains a 21S rRNA (21S mt-rRNA) and at least 45 different proteins.

Its subcellular location is the mitochondrion. In terms of biological role, component of the mitochondrial ribosome (mitoribosome), a dedicated translation machinery responsible for the synthesis of mitochondrial genome-encoded proteins, including at least some of the essential transmembrane subunits of the mitochondrial respiratory chain. The mitoribosomes are attached to the mitochondrial inner membrane and translation products are cotranslationally integrated into the membrane. mS41 is involved in telomere length regulation. This is Small ribosomal subunit protein mS41 (fyv4) from Schizosaccharomyces pombe (strain 972 / ATCC 24843) (Fission yeast).